Reading from the N-terminus, the 206-residue chain is 2,3-bisphosphoglycerate-dependent phosphoglycerate mutase (206 aa).

Residues 9-16 (RHGQSEWN), 22-23 (TG), arginine 61, 88-91 (ERDY), lysine 99, 115-116 (RR), and 159-160 (GN) each bind substrate. The active-site Tele-phosphohistidine intermediate is histidine 10. Glutamate 88 acts as the Proton donor/acceptor in catalysis.

This sequence belongs to the phosphoglycerate mutase family. BPG-dependent PGAM subfamily. In terms of assembly, homodimer.

It carries out the reaction (2R)-2-phosphoglycerate = (2R)-3-phosphoglycerate. It participates in carbohydrate degradation; glycolysis; pyruvate from D-glyceraldehyde 3-phosphate: step 3/5. Catalyzes the interconversion of 2-phosphoglycerate and 3-phosphoglycerate. The polypeptide is 2,3-bisphosphoglycerate-dependent phosphoglycerate mutase (Azorhizobium caulinodans (strain ATCC 43989 / DSM 5975 / JCM 20966 / LMG 6465 / NBRC 14845 / NCIMB 13405 / ORS 571)).